The primary structure comprises 415 residues: Ammonium transporter Rh type A (415 aa).

The Cytoplasmic portion of the chain corresponds to 1 to 2; sequence MR. Residues 3 to 23 form a helical membrane-spanning segment; the sequence is FIFPTIAVLLEASMIVLFGFF. Topologically, residues 24 to 51 are extracellular; the sequence is VKYETEQNAIQQPNSTNSTKVDRSLELY. N-linked (GlcNAc...) asparagine glycans are attached at residues Asn-37 and Asn-40. The helical transmembrane segment at 52 to 72 threads the bilayer; sequence PLFQDVHVMIFVGFGFLMTFL. Topologically, residues 73 to 76 are cytoplasmic; it reads KKYG. A helical transmembrane segment spans residues 77–97; that stretch reads FSSVGINLLIAALGLQWGTFV. Over 98 to 115 the chain is Extracellular; that stretch reads QGMVHRHGQTIYIGIKNM. A helical transmembrane segment spans residues 116–136; it reads INADFSTATVLISFGAVLGKI. Residues 137 to 142 lie on the Cytoplasmic side of the membrane; the sequence is SPTQML. Residues 143–163 form a helical membrane-spanning segment; sequence IMTIIEITVFAGNEYVVGEIF. Topologically, residues 164–167 are extracellular; sequence QASD. A helical transmembrane segment spans residues 168 to 188; the sequence is IGASMTIHAFGAYFGLAVAGV. The Cytoplasmic segment spans residues 189–208; sequence LYRTGLRKGHEKEESEYHSD. The chain crosses the membrane as a helical span at residues 209-229; that stretch reads LFAMIGTLFLWMFWPSFNSAI. Over 230 to 236 the chain is Extracellular; it reads AETAEEQ. A helical transmembrane segment spans residues 237-257; that stretch reads YLAIINTYLSLVACVLTAYAM. At 258–268 the chain is on the cytoplasmic side; sequence SSLVGHRGKLD. The helical transmembrane segment at 269–287 threads the bilayer; that stretch reads MVHIQNATLAGGVAVGTCA. Residues 288–290 lie on the Extracellular side of the membrane; sequence DMK. Residues 291–311 form a helical membrane-spanning segment; the sequence is IHPYGSLIIGSIAGMVSVLGF. The Cytoplasmic segment spans residues 312–332; sequence RFLTPCLTAKLRIHDTCGVHN. A helical membrane pass occupies residues 333–353; that stretch reads LHGLPGVVGGLSSIVAILLGV. Over 354–363 the chain is Extracellular; it reads STASSMTMQA. The helical transmembrane segment at 364-384 threads the bilayer; sequence AALGSSIGSAIAGGLITGLIL. At 385-415 the chain is on the cytoplasmic side; that stretch reads RFIVRGQPSKDNFFDDSVYWEVPKEKELDNV.

The protein belongs to the ammonium transporter (TC 2.A.49) family. Rh subfamily. Homodimer. Heterotrimer; a RHCE monomer interacts with a RHAG homodimer. Component of the ankyrin-1 complex in the erythrocyte, composed of ANK1, RHCE, RHAG, SLC4A1, EPB42, GYPA, GYPB and AQP1. Interacts with GYPB (via the N-terminal); this interaction bridges the (RHAG)2(RHCE) heterotrimer with the SLC4A1 Band 3 I dimer complexed with GYPA. Glycosylated.

It is found in the membrane. The catalysed reaction is methylamine(out) = methylamine(in). The enzyme catalyses NH4(+)(in) = NH4(+)(out). It carries out the reaction CO2(out) = CO2(in). In terms of biological role, component of the ankyrin-1 complex, a multiprotein complex involved in the stability and shape of the erythrocyte membrane. Heterotrimer with RHCE (RHAG)2(RHCE), that transports ammonium and its related derivative methylammonium, in both neutral and ionic forms, across the erythrocyte membrane. The transport of NH4(+) is electrogenic and masks the NH3 transport. Also, may act as a CO2 channel. Moreover in erythrocyte, regulates RHD membrane expression and is associated with rhesus blood group antigen expression. This chain is Ammonium transporter Rh type A, found in Canis lupus familiaris (Dog).